A 640-amino-acid chain; its full sequence is Threonine--tRNA ligase (640 aa).

The region spanning 1–60 (MKITFPDGAVKEFEPGVSTADIAASISPGLKKKALAGKLNGELLDLVTPIHEDGAIEIVT) is the TGS domain. A catalytic region spans residues 241–538 (DHRKLGKELE…LIEEYKGAFP (298 aa)). Cys-334, His-385, and His-515 together coordinate Zn(2+).

Belongs to the class-II aminoacyl-tRNA synthetase family. As to quaternary structure, homodimer. Requires Zn(2+) as cofactor.

The protein localises to the cytoplasm. The enzyme catalyses tRNA(Thr) + L-threonine + ATP = L-threonyl-tRNA(Thr) + AMP + diphosphate + H(+). In terms of biological role, catalyzes the attachment of threonine to tRNA(Thr) in a two-step reaction: L-threonine is first activated by ATP to form Thr-AMP and then transferred to the acceptor end of tRNA(Thr). Also edits incorrectly charged L-seryl-tRNA(Thr). This chain is Threonine--tRNA ligase, found in Listeria monocytogenes serovar 1/2a (strain ATCC BAA-679 / EGD-e).